We begin with the raw amino-acid sequence, 314 residues long: tRNA dimethylallyltransferase (314 aa).

12–19 (GPTASGKT) serves as a coordination point for ATP. Residue 14 to 19 (TASGKT) participates in substrate binding. Interaction with substrate tRNA stretches follow at residues 37–40 (DSAL), 161–165 (QRIQR), and 244–249 (RCVGYR).

This sequence belongs to the IPP transferase family. In terms of assembly, monomer. Mg(2+) is required as a cofactor.

The catalysed reaction is adenosine(37) in tRNA + dimethylallyl diphosphate = N(6)-dimethylallyladenosine(37) in tRNA + diphosphate. Catalyzes the transfer of a dimethylallyl group onto the adenine at position 37 in tRNAs that read codons beginning with uridine, leading to the formation of N6-(dimethylallyl)adenosine (i(6)A). The chain is tRNA dimethylallyltransferase from Janthinobacterium sp. (strain Marseille) (Minibacterium massiliensis).